We begin with the raw amino-acid sequence, 27 residues long: M-ectatotoxin-Eb2a (27 aa).

In terms of tissue distribution, expressed by the venom gland.

It localises to the secreted. Antimicrobial peptide forming an alpha-helix in watery and membraneous environments, enabling it to perforate membranes. Active against Gram-negative bacteria E.coli DH5alpha (MIC=5 uM), E.coli MH1 (MIC=0.6 uM) and P.aeruginosa PAO1 (MIC=10 uM) and against Gram-positive bacteria B.subtilis VKM B-501 (MIC=0.6 uM) and A.globiformis VKM Ac-1112 (MIC=0.2 uM). Has cytolytic and hemolytic activity. This chain is M-ectatotoxin-Eb2a, found in Ectatomma brunneum (Ant).